Consider the following 196-residue polypeptide: Neurensin-1 (196 aa).

The next 2 membrane-spanning stretches (helical) occupy residues 67–87 (LISGTVFVILGLTVLAVGFLV) and 121–141 (AVLFCIGGTSMAGCLLMSVFA).

Belongs to the VMP family. Expressed predominantly in brain. Also weakly expressed in lung and spleen. In brain, expressed strongly in nerve fibers of the cerebral cortex, anterior cerebral nuclei, hypothalamus, amygdaloid complex, brain stem of the metaencephalon and medulla oblongata, and moderately expressed in soma of neurons of the dentate gyrus of the hippocampus and Purkinje cells of the cerebellum.

Its subcellular location is the membrane. The protein localises to the cell projection. The protein resides in the neuron projection. In terms of biological role, may play an important role in neural organelle transport, and in transduction of nerve signals or in nerve growth. May play a role in neurite extension. The sequence is that of Neurensin-1 from Mus musculus (Mouse).